The following is a 194-amino-acid chain: Small ribosomal subunit protein uS4c (194 aa).

The S4 RNA-binding domain maps to 84 to 144; sequence MRLDTLLYRT…KEILKSLNDK (61 aa).

Belongs to the universal ribosomal protein uS4 family. Part of the 30S ribosomal subunit. Contacts protein S5. The interaction surface between S4 and S5 is involved in control of translational fidelity.

It localises to the plastid. Its subcellular location is the chloroplast. Functionally, one of the primary rRNA binding proteins, it binds directly to 16S rRNA where it nucleates assembly of the body of the 30S subunit. Its function is as follows. With S5 and S12 plays an important role in translational accuracy. In Bigelowiella natans (Pedinomonas minutissima), this protein is Small ribosomal subunit protein uS4c (rps4).